Consider the following 237-residue polypeptide: Neural retina-specific leucine zipper protein (237 aa).

Residues lysine 20 and lysine 24 each participate in a glycyl lysine isopeptide (Lys-Gly) (interchain with G-Cter in SUMO) cross-link. The segment at 26–64 is disordered; it reads EPSEGRSGVPTASLGSTPYSSVPPSPTFSEPGMVGGGEA. Positions 30–93 are minimal transactivation domain (MTD); sequence GRSGVPTASL…SDEVLGLSPD (64 aa). Residues 159–185 are basic motif; sequence RLKQRRRTLKNRGYAQACRSKRLQQRR. The bZIP domain maps to 159–222; the sequence is RLKQRRRTLK…DLYKARCDRL (64 aa). A leucine-zipper region spans residues 187–208; it reads LEAERARLAAQLDALRAEVARL.

It belongs to the bZIP family. In terms of assembly, interacts with FIZ1; this interaction represses transactivation. Interacts (via the leucine-zipper domain) with CRX. In terms of processing, disumoylated at Lys-20. Sumoylation modulates the transcriptional activity of NRL on RHO and NR2E3 promoters, and is required for normal rod differentiation. Post-translationally, phosphorylated. As to expression, expressed in the retina (at protein level).

It is found in the cytoplasm. It localises to the nucleus. In terms of biological role, acts as a transcriptional activator which regulates the expression of several rod-specific genes, including RHO and PDE6B. Also functions as a transcriptional coactivator, stimulating transcription mediated by the transcription factor CRX and NR2E3. Binds to the rhodopsin promoter in a sequence-specific manner. The polypeptide is Neural retina-specific leucine zipper protein (Nrl) (Mus musculus (Mouse)).